Here is a 457-residue protein sequence, read N- to C-terminus: MELKRPFKIFGTDGIRGRANKSPMVPEIALALGRAAGQLLSRLGKSRVVIGKDTRLSCYVFENALIAGLCSMGVDTLMVGPLPTPGVAFITRAYRADAGIVISASHNPYYDNGIKLFDSQGFKLPDSWEAEMEAMIAKNHFDEELPADDDIGKNTKIIDADGRYIEFVKATFPRKISLKNLKIVLDCANGAGYKVAPLVFKELDATVFTCGVTPNGLNINSQCGSMHPETAQKAVIDNRADVGIALDGDADRVVMIDENAQIVDGDTMLAICARDMFKQKLLKNNRVVGTVMSNLGFIKAMECLGVEVIKSQVGDRYVIQDMLKYDANLGGEQSGHVIFLDHNTTGDGLVCALQVLRIMIETDSKLSDLASFVQRYPQTCLNIKVSSKPSLDSIERLKEVIAQVEEILGNSGRVLVRYSGTENTCRVMVEGPKYKQVIQLANQIADIVQEEIGLSVS.

The active-site Phosphoserine intermediate is the S105. Mg(2+) is bound by residues S105, D247, D249, and D251. S105 is subject to Phosphoserine.

This sequence belongs to the phosphohexose mutase family. Requires Mg(2+) as cofactor. Activated by phosphorylation.

It carries out the reaction alpha-D-glucosamine 1-phosphate = D-glucosamine 6-phosphate. Its function is as follows. Catalyzes the conversion of glucosamine-6-phosphate to glucosamine-1-phosphate. The polypeptide is Phosphoglucosamine mutase (Protochlamydia amoebophila (strain UWE25)).